Reading from the N-terminus, the 843-residue chain is Probable inorganic carbon transporter subunit DabA 2 (843 aa).

Residues Cys-352, Asp-354, His-536, and Cys-551 each contribute to the Zn(2+) site.

Belongs to the inorganic carbon transporter (TC 9.A.2) DabA family. Forms a complex with DabB. The cofactor is Zn(2+).

The protein localises to the cell inner membrane. Its function is as follows. Part of an energy-coupled inorganic carbon pump. In Bradyrhizobium sp. (strain BTAi1 / ATCC BAA-1182), this protein is Probable inorganic carbon transporter subunit DabA 2.